Reading from the N-terminus, the 94-residue chain is MSCQIFEKLEAVIRQRIAEGNPQSYTYRLYSSGVSTIARKVGEEAVEVAVAALAEGRERVVEESADLLYHLLVLLNSLGLSLGDVCKELERRMK.

This sequence belongs to the PRA-PH family.

The protein localises to the cytoplasm. The enzyme catalyses 1-(5-phospho-beta-D-ribosyl)-ATP + H2O = 1-(5-phospho-beta-D-ribosyl)-5'-AMP + diphosphate + H(+). The protein operates within amino-acid biosynthesis; L-histidine biosynthesis; L-histidine from 5-phospho-alpha-D-ribose 1-diphosphate: step 2/9. The chain is Phosphoribosyl-ATP pyrophosphatase (hisE) from Pyrobaculum aerophilum (strain ATCC 51768 / DSM 7523 / JCM 9630 / CIP 104966 / NBRC 100827 / IM2).